The primary structure comprises 1358 residues: Retrotransposon-like protein 1 (1358 aa).

2 disordered regions span residues 1 to 159 (MIEP…TEHS) and 563 to 616 (ADVF…TAPW). The span at 19–30 (SSKQMESSEGSS) shows a compositional bias: low complexity. Residues 65–79 (EMEELPTDLLQDMEE) show a composition bias toward acidic residues. Residues 131 to 149 (AREEQEAHTDLKESGREET) are compositionally biased toward basic and acidic residues. Over residues 583–592 (GSDDLSESEP) the composition is skewed to acidic residues. The next 2 membrane-spanning stretches (helical) occupy residues 1083 to 1099 (LLYW…LVLL) and 1126 to 1146 (LILD…TQLL). 2 disordered regions span residues 1250–1283 (DGLQ…PRHL) and 1338–1358 (QPRE…ANLD). A compositionally biased stretch (low complexity) spans 1267-1276 (APPSHTAATH). The segment covering 1338–1347 (QPREQARLEE) has biased composition (basic and acidic residues). Over residues 1348–1358 (LPDEDEDANLD) the composition is skewed to acidic residues.

It is found in the membrane. Its function is as follows. Plays an essential role in capillaries endothelial cells for the maintenance of feto-maternal interface and for development of the placenta. The chain is Retrotransposon-like protein 1 (RTL1) from Homo sapiens (Human).